Here is a 928-residue protein sequence, read N- to C-terminus: MTSTTMVTTLDLVTPTSEEQPGPAPESSDFSTVVLSPDGSELVTQSAPNTPIQHREQANAEFGQKEGSPDPKNMVAATGNASKPSLNSFYADGLGQLRNGLFSCFQPVFGYFGTKTTVEIEKSEDELWEIPFDAISELEWLGSGSQGAVFRGQLENRTVAVKKVNQLKETEIKHLRHLRHQNIIEFLGVCSKSPCYCIVMEYCSKGQLCTVLKSRNTITRELFAQWVKEIADGMHYLHQNKVIHRDLKSPNILISAEDSIKICDFGTSHMQKKMDSTMMSFCGTVSWMAPEMIKKQPCNEKVDVYSFGVVLWEMLTRETPYANIAQMAIIFGVGTNILSLPMPEEAPKGLVLLIKQCLSQKGRNRPSFSHIRQHWEIFKPELFEMTEEEWQLAWDSYREFAKCIQYPSTVTRDHGGPKSAFAMEEEIQRKRHEQLNHIKDIRNMYEMKLKRTNKMYDKLQGCFTELKLKESELAEWEKDLTEREQWHNQNSPKAVAAPRAQLRGYPNEGYDDMSSDEDVQPCRGSPYRCSNTSSSSGVQSSPFSRQSSSRSSAGQQTRRSEGANPPKILRNDAIRHSGSYWETLGGARGSPARDSGFSQDSGMWSAGAGSCTAINGGGQQVCYSQTLYRNGDGRWSDGRIASRRRVSTSVNKSTAVPGQPVFFTRDSPSRVPHGVISCSSPRSSSKLNRSSYPSRNAPHQLEDGCCCAHARAPRAKSIAVPMTSSSRARSPTPYDNDFENAESFVDPESPKNLKNLEKIVNLPESTSYDEALCNSDVTMNPIYTSPITTYSNPCHVELVDEENANDVDLTSSMDSRRSRSDDADVESSEEDEGNGNNILNTSMESEDLRYRIDTSQSTMMSSLERSLEIGATRSDGLSDNEMRVQAVKMSIKTHRRTGSNPQALIHQCIDEYTTSATDDSDDAGAVRI.

The interval 1 to 72 is disordered; that stretch reads MTSTTMVTTL…GQKEGSPDPK (72 aa). The segment covering 42 to 52 has biased composition (polar residues); the sequence is LVTQSAPNTPI. A compositionally biased stretch (basic and acidic residues) spans 53 to 69; sequence QHREQANAEFGQKEGSP. The Protein kinase domain maps to 135–377; sequence ISELEWLGSG…FSHIRQHWEI (243 aa). ATP contacts are provided by residues 141 to 149 and Lys162; that span reads LGSGSQGAV. Residue Asp246 is the Proton acceptor of the active site. The interval 459–480 is leucine-zipper; sequence LQGCFTELKLKESELAEWEKDL. 3 disordered regions span residues 483 to 575, 644 to 696, and 802 to 845; these read REQW…DAIR, RRVS…PSRN, and ENAN…SMES. Residues 509 to 519 are compositionally biased toward acidic residues; sequence GYDDMSSDEDV. Positions 530-557 are enriched in low complexity; that stretch reads SNTSSSSGVQSSPFSRQSSSRSSAGQQT. The important for interaction between isoform a and isoform c stretch occupies residues 605–814; sequence SAGAGSCTAI…NDVDLTSSMD (210 aa). Positions 647–656 are enriched in polar residues; the sequence is STSVNKSTAV. Positions 677–695 are enriched in low complexity; it reads SCSSPRSSSKLNRSSYPSR. The segment covering 823–833 has biased composition (acidic residues); sequence ADVESSEEDEG. 2 positions are modified to phosphoserine: Ser874 and Ser878. Residues 874-879 carry the SDGLSD hexapeptide motif; the sequence is SDGLSD.

Belongs to the protein kinase superfamily. STE Ser/Thr protein kinase family. MAP kinase kinase kinase subfamily. In terms of assembly, homooligomer (via leucine zipper domain and hexapeptide motif). Isoform a (via leucine zipper domain) forms a heterooligomer with isoform c (via leucine zipper domain). Isoform c does not self-associate. It depends on Mg(2+) as a cofactor. In terms of processing, ubiquitinated by rpm-1. Negatively regulated by ubiquitination by fsn-1 bound rpm-1, followed by degradation. Post-translationally, phosphorylation at Ser-874 and/or at Ser-878 abolishes interaction with isoform c and promotes binding to isoform a kinase domain (likely in trans) resulting in isoform a self-association and activation. In terms of tissue distribution, expressed in nerve ring, nerve cord, neurons, and pharynx.

The protein localises to the synapse. The protein resides in the cytoplasm. It localises to the cell projection. It is found in the axon. Its subcellular location is the dendrite. The protein localises to the cilium. It carries out the reaction L-seryl-[protein] + ATP = O-phospho-L-seryl-[protein] + ADP + H(+). The catalysed reaction is L-threonyl-[protein] + ATP = O-phospho-L-threonyl-[protein] + ADP + H(+). Inactive when associated with isoform c. Dissociation from isoform c, which is dependent on the phosphorylation of the C-terminal hexapeptide, results in self-association and activation. Transient increase in Ca(2+) levels caused by axonal injury or synaptic activity triggers the dissociation of isoform a from isoform c; the dissociation may be influenced by the phosphorylation status of the C-terminal hexapeptide. In terms of biological role, component of a MAP kinase pathway that functions presynaptically to regulate synaptic architecture and presynaptic differentiation. Phosphorylates and activates mkk-4. Has a role in axonal regrowth following injury and synaptogenesis. Plays a role in modulating polymerization of neuronal microtubules. Also promotes tubulin post-translational modifications that protect microtubules. Plays a role in cilium length regulation, possibly by reducing rab-5 mediated endocytosis, and may also have a role in intraflagellar transport in cilia. Plays a role in the formation of muscle connections, also called muscle arm extensions, between the body wall and the motor axons in the dorsal and ventral cord. Functionally, has a role in synapse and axon development, and in axonal regrowth following injury. Its function is as follows. By forming heterooligomers with isoform a, acts as an inhibitor of isoform a activation. Its inhibitory function is independent of its catalytic activity. The sequence is that of Mitogen-activated protein kinase kinase kinase dlk-1 (dlk-1) from Caenorhabditis elegans.